Consider the following 207-residue polypeptide: Large ribosomal subunit protein uL4 (207 aa).

Polar residues predominate over residues 43-52; it reads NKRQGTQSAK. A disordered region spans residues 43 to 72; sequence NKRQGTQSAKTRAEVRGGGRKPWKQKGTGR. The segment covering 60–71 has biased composition (basic residues); that stretch reads GGRKPWKQKGTG.

Belongs to the universal ribosomal protein uL4 family. Part of the 50S ribosomal subunit.

Its function is as follows. One of the primary rRNA binding proteins, this protein initially binds near the 5'-end of the 23S rRNA. It is important during the early stages of 50S assembly. It makes multiple contacts with different domains of the 23S rRNA in the assembled 50S subunit and ribosome. In terms of biological role, forms part of the polypeptide exit tunnel. The protein is Large ribosomal subunit protein uL4 of Alkaliphilus metalliredigens (strain QYMF).